Reading from the N-terminus, the 828-residue chain is Toll-like receptor 4 (828 aa).

A signal peptide spans 1–23 (MMSASRLAGTLIPAMAFLSCVRP). Residues 24 to 629 (ESWEPCVVPN…SLNITCQMNK (606 aa)) are Extracellular-facing. A disulfide bridge connects residues cysteine 29 and cysteine 38. N-linked (GlcNAc...) asparagine glycosylation is present at asparagine 33. LRR repeat units follow at residues 53-74 (STKNLDLSFNPLRHLGSYSFFS), 77-98 (ELQVLDLSRCEIQTIEDGAYQS), 101-122 (HLSTLILTGNPIQNLALGAFSG), 125-146 (SLQKLVAVETNLASLENFPIGH), and 149-170 (TLKELNVAHNLIQSFKLPEYFS). A glycan (N-linked (GlcNAc...) asparagine) is linked at asparagine 171. LRR repeat units lie at residues 174–195 (NLEHLDLSSNKIQSIYCKDLQV), 203–223 (NLSLDLSLNAMNFIQPGAFKE), and 225–245 (RLHKLTLRNSFDSLNVMKTCI). The N-linked (GlcNAc...) asparagine glycan is linked to asparagine 203. Residues cysteine 279 and cysteine 304 are joined by a disulfide bond. Residues asparagine 280 and asparagine 307 are each glycosylated (N-linked (GlcNAc...) asparagine). LRR repeat units follow at residues 372–392 (SLEFLDLSRNGLSFKGCCSQS), 398–420 (SLKYLDLSFNDVITMGSNFLGLE), 421–442 (QLEHLDFQHSNLKQMSEFSVFL), 446–454 (NLIYLDISH), 470–493 (SLKVLKMAGNSFQENFLPDIFTEL), 495–516 (NLTFLDLSQCQLEQLSPTAFNS), 519–540 (SLQVLNMSHNNFFSLDTFPYKC), and 543–563 (SLQVLDYSLNHIMTSKKQELQ). An intrachain disulfide couples cysteine 388 to cysteine 389. 2 N-linked (GlcNAc...) asparagine glycosylation sites follow: asparagine 495 and asparagine 524. N-linked (GlcNAc...) asparagine glycosylation is present at asparagine 573. The LRRCT domain occupies 577 to 627 (NDFACTCEHQSFLQWIKDQRQLLVEVERMECATPSDKQGMPVLSLNITCQM). Cystine bridges form between cysteine 581–cysteine 607 and cysteine 583–cysteine 625. N-linked (GlcNAc...) asparagine glycosylation is found at asparagine 622 and asparagine 628. The chain crosses the membrane as a helical span at residues 630-650 (TVIGVSVFSVLVVSVVAVLVY). Topologically, residues 651–828 (KFYFHLMLLA…WNPEGTVGTG (178 aa)) are cytoplasmic. One can recognise a TIR domain in the interval 670–813 (NTYDAFVIYS…IFWRRLRKAL (144 aa)).

This sequence belongs to the Toll-like receptor family. In terms of assembly, belongs to the lipopolysaccharide (LPS) receptor, a multi-protein complex containing at least CD14, LY96 and TLR4. Binding to bacterial LPS leads to homodimerization. Interacts with LY96 via the extracellular domain. Interacts with MYD88 and TIRAP via their respective TIR domains. Interacts with TICAM2. Interacts with NOX4. Interacts with CNPY3 and HSP90B1; this interaction is required for proper folding in the endoplasmic reticulum. Interacts with MAP3K21; this interaction leads to negative regulation of TLR4 signaling. Interacts with CD36, following CD36 stimulation by oxLDL or amyloid-beta 42, and forms a heterodimer with TLR6. The trimeric complex is internalized and triggers inflammatory response. LYN kinase activity facilitates TLR4-TLR6 heterodimerization and signal initiation. Interacts with TICAM1 in response to LPS in a WDFY1-dependent manner. Interacts with WDFY1 in response to LPS. Interacts with SMPDL3B. Interacts with CEACAM1; upon lipopolysaccharide stimulation, forms a complex including TLR4 and the phosphorylated form of SYK and CEACAM1, which in turn, recruits PTPN6 that dephosphorylates SYK, reducing the production of reactive oxygen species (ROS) and lysosome disruption, which in turn, reduces the activity of the inflammasome. Interacts with RFTN1; the interaction occurs in response to lipopolysaccharide stimulation. Interacts with SCIMP; the interaction occurs in response to lipopolysaccharide stimulation and is enhanced by phosphorylation of SCIMP by LYN. This interaction facilitates the phosphorylation of TLR4 by LYN which elicits a selective cytokine response in macrophages. Interacts with TRAF3IP3. Interacts with TREM1; this interaction enhances TLR4-mediated inflammatory response. Interacts with ZG16B/PAUF. Interacts with CD82; this interaction inhibits TLR4-mediated signaling pathway. Post-translationally, phosphorylated on tyrosine residues by LYN after binding lipopolysaccharide. Ubiquitinated by RNF128 via 'Lys-28'-linked polyubiquitin chains, leading to proteasomal degradation.

Its subcellular location is the cell membrane. It is found in the early endosome. The protein localises to the cell projection. It localises to the ruffle. Its function is as follows. Transmembrane receptor that functions as a pattern recognition receptor recognizing pathogen- and damage-associated molecular patterns (PAMPs and DAMPs) to induce innate immune responses via downstream signaling pathways. At the plasma membrane, cooperates with LY96 to mediate the innate immune response to bacterial lipopolysaccharide (LPS). Also involved in LPS-independent inflammatory responses triggered by free fatty acids, such as palmitate, and Ni(2+). Mechanistically, acts via MYD88, TIRAP and TRAF6, leading to NF-kappa-B activation, cytokine secretion and the inflammatory response. Alternatively, CD14-mediated TLR4 internalization via endocytosis is associated with the initiation of a MYD88-independent signaling via the TICAM1-TBK1-IRF3 axis leading to type I interferon production. In addition to the secretion of proinflammatory cytokines, initiates the activation of NLRP3 inflammasome and formation of a positive feedback loop between autophagy and NF-kappa-B signaling cascade. In complex with TLR6, promotes inflammation in monocytes/macrophages by associating with TLR6 and the receptor CD86. Upon ligand binding, such as oxLDL or amyloid-beta 42, the TLR4:TLR6 complex is internalized and triggers inflammatory response, leading to NF-kappa-B-dependent production of CXCL1, CXCL2 and CCL9 cytokines, via MYD88 signaling pathway, and CCL5 cytokine, via TICAM1 signaling pathway. In myeloid dendritic cells, vesicular stomatitis virus glycoprotein G but not LPS promotes the activation of IRF7, leading to type I IFN production in a CD14-dependent manner. This Pongo pygmaeus (Bornean orangutan) protein is Toll-like receptor 4 (TLR4).